The following is a 469-amino-acid chain: 3-isopropylmalate dehydratase large subunit 2 (469 aa).

Residues Cys-347, Cys-408, and Cys-411 each coordinate [4Fe-4S] cluster.

The protein belongs to the aconitase/IPM isomerase family. LeuC type 1 subfamily. As to quaternary structure, heterodimer of LeuC and LeuD. Requires [4Fe-4S] cluster as cofactor.

The catalysed reaction is (2R,3S)-3-isopropylmalate = (2S)-2-isopropylmalate. It functions in the pathway amino-acid biosynthesis; L-leucine biosynthesis; L-leucine from 3-methyl-2-oxobutanoate: step 2/4. In terms of biological role, catalyzes the isomerization between 2-isopropylmalate and 3-isopropylmalate, via the formation of 2-isopropylmaleate. The polypeptide is 3-isopropylmalate dehydratase large subunit 2 (Mannheimia succiniciproducens (strain KCTC 0769BP / MBEL55E)).